The chain runs to 121 residues: Large ribosomal subunit protein bL12 (121 aa).

This sequence belongs to the bacterial ribosomal protein bL12 family. As to quaternary structure, homodimer. Part of the ribosomal stalk of the 50S ribosomal subunit. Forms a multimeric L10(L12)X complex, where L10 forms an elongated spine to which 2 to 4 L12 dimers bind in a sequential fashion. Binds GTP-bound translation factors.

Forms part of the ribosomal stalk which helps the ribosome interact with GTP-bound translation factors. Is thus essential for accurate translation. The chain is Large ribosomal subunit protein bL12 from Bacillus pumilus (strain SAFR-032).